The chain runs to 291 residues: 4-diphosphocytidyl-2-C-methyl-D-erythritol kinase (291 aa).

Lys10 is a catalytic residue. 94–104 (PVSAGLAGGSS) contacts ATP. Asp136 is a catalytic residue.

Belongs to the GHMP kinase family. IspE subfamily.

The enzyme catalyses 4-CDP-2-C-methyl-D-erythritol + ATP = 4-CDP-2-C-methyl-D-erythritol 2-phosphate + ADP + H(+). Its pathway is isoprenoid biosynthesis; isopentenyl diphosphate biosynthesis via DXP pathway; isopentenyl diphosphate from 1-deoxy-D-xylulose 5-phosphate: step 3/6. Its function is as follows. Catalyzes the phosphorylation of the position 2 hydroxy group of 4-diphosphocytidyl-2C-methyl-D-erythritol. The protein is 4-diphosphocytidyl-2-C-methyl-D-erythritol kinase of Listeria welshimeri serovar 6b (strain ATCC 35897 / DSM 20650 / CCUG 15529 / CIP 8149 / NCTC 11857 / SLCC 5334 / V8).